Reading from the N-terminus, the 91-residue chain is DNA/RNA-binding protein Alba (91 aa).

This sequence belongs to the histone-like Alba family.

It is found in the cytoplasm. Its subcellular location is the chromosome. Functionally, binds double-stranded DNA tightly but without sequence specificity. Involved in DNA compaction. This Methanoculleus marisnigri (strain ATCC 35101 / DSM 1498 / JR1) protein is DNA/RNA-binding protein Alba.